Here is a 968-residue protein sequence, read N- to C-terminus: MGDEYLAEPEDEVAISMWPENIGDKHQKQFKMEKLGKDQDALEDANFQQKPSSVDLNRLMELANSEKGVSQMQYFVKHWEYKRANTARLLKEQIGLLCQQRKEIEQRKQQILEEQQFQDESYYAVKRQVPILDEVYKDEWKRPSKKNDDLSHNQELKIDAEYDSISYWKERAMQLEKTLEASLQRERSLEEKLEENIKNLQSHTPVEEFSGMLKRADYFLHLVLQSAPIVIAHQDADLRYRFIFNHFPTLADEDVIGKTDYEILSGEGIEEMNNVKKEVMASGKATKREFVFNTPLFGAKTFVTYIEPVFSKSGETIGVNYVAMDITDQVTRREKMADIRVREAVQKAKETELSKSLHITEETMRAKQMLATMSHEIRSPLSGVLSMAEILATTKLDKEQYQLLEVMLSSGDLVLQLINDILDLSKVESGAMKLEATTFRPREVVKHVLQTAAASLKKELILEGCIGDNVPLEVTGDVLRIRQILTNLISNAVKFTHEGKVGINLHVLDKQLPGCRIEGGQLHSKAHSAPAAAAEHFSASPRKCDNDTLGCSNHEDACQTGIPSNDNFGEHHEGDEVVWLRCDVYDTGIGIPEKSLPLLFKRYMQASDDHARKYGGTGLGLAICKQLVELMGGTLTVVSKENEGSTFSFVLPCKIPVKEDHSDDPDDMPSSGGDFTTSDIEGSFIFKPQARPYLLTSGVSVMNNTKLIGGNQFYDPPNILEDRKPFSNGFVLAEDHSTNSASTAHQSNGPSVSRTNKEQHDNAMVIELNRQAERVSSSRGDTTSVSGLIHEERGPCRVHEEKSLHKKSKCSPSSNKAKILLVEDNKVNIMVAKSMLEQLGHGIDIVNNGLEAIRAIQKRQYDIILMDVHMPEMDGLQATKFIRSFENTGCWDTSVKPEHDQIIAGSDNLSDCAHMKKQGKRVPIIAMTANSFSESAEECLAAGMDSYISKPVNFQNIKECLQQYLPPQ.

Coiled-coil stretches lie at residues 89-120 (LLKEQIGLLCQQRKEIEQRKQQILEEQQFQDE) and 169-204 (KERAMQLEKTLEASLQRERSLEEKLEENIKNLQSHT). The 284-residue stretch at 372–655 (TMSHEIRSPL…TFSFVLPCKI (284 aa)) folds into the Histidine kinase domain. Histidine 375 bears the Phosphohistidine; by autocatalysis mark. Positions 737–757 (STNSASTAHQSNGPSVSRTNK) are disordered. Residues 738 to 754 (TNSASTAHQSNGPSVSR) are compositionally biased toward polar residues. The Response regulatory domain occupies 818–965 (KILLVEDNKV…NIKECLQQYL (148 aa)). Aspartate 867 is modified (4-aspartylphosphate).

In terms of processing, activation probably requires a transfer of a phosphate group between a His in the transmitter domain and an Asp of the receiver domain.

It carries out the reaction ATP + protein L-histidine = ADP + protein N-phospho-L-histidine.. Its function is as follows. Cytokinin receptor related to bacterial two-component regulators. Functions as a histidine kinase and transmits the stress signal to a downstream MAPK cascade. The polypeptide is Probable histidine kinase 1 (Oryza sativa subsp. indica (Rice)).